Here is a 441-residue protein sequence, read N- to C-terminus: Ribosomal protein uS12 methylthiotransferase RimO (441 aa).

The region spanning 8 to 118 (PKIGFVSLGC…VLEHVHHYVP (111 aa)) is the MTTase N-terminal domain. Positions 17, 53, 82, 150, 154, and 157 each coordinate [4Fe-4S] cluster. The 238-residue stretch at 136–373 (LTPRHYAYLK…MQLQQQISAE (238 aa)) folds into the Radical SAM core domain. One can recognise a TRAM domain in the interval 376–441 (QEKVGREILV…DEYDLWGSRV (66 aa)).

The protein belongs to the methylthiotransferase family. RimO subfamily. [4Fe-4S] cluster is required as a cofactor.

The protein resides in the cytoplasm. The catalysed reaction is L-aspartate(89)-[ribosomal protein uS12]-hydrogen + (sulfur carrier)-SH + AH2 + 2 S-adenosyl-L-methionine = 3-methylsulfanyl-L-aspartate(89)-[ribosomal protein uS12]-hydrogen + (sulfur carrier)-H + 5'-deoxyadenosine + L-methionine + A + S-adenosyl-L-homocysteine + 2 H(+). In terms of biological role, catalyzes the methylthiolation of an aspartic acid residue of ribosomal protein uS12. This chain is Ribosomal protein uS12 methylthiotransferase RimO, found in Shigella sonnei (strain Ss046).